The sequence spans 126 residues: Small ribosomal subunit protein uS13c (126 aa).

The interval Gly-100–Lys-126 is disordered. Positions Gln-101–Lys-126 are enriched in basic residues.

This sequence belongs to the universal ribosomal protein uS13 family. As to quaternary structure, part of the 30S ribosomal subunit.

It localises to the plastid. It is found in the cyanelle. Located at the top of the head of the 30S subunit, it contacts several helices of the 16S rRNA. The sequence is that of Small ribosomal subunit protein uS13c from Cyanophora paradoxa.